A 597-amino-acid polypeptide reads, in one-letter code: uncharacterized protein (597 aa).

In terms of domain architecture, Helicase ATP-binding spans 48–198; it reads LHPYNPYSSL…DSILSLTKET (151 aa). ATP is bound at residue 61–68; sequence YDVGLGKT. The DEVH box signature appears at 146–149; the sequence is DEVH. A Helicase C-terminal domain is found at 275–467; the sequence is KINAFINSIK…DIPKIDNEMV (193 aa).

The protein belongs to the helicase family.

Its function is as follows. The presence of the two linear plasmids, termed pGKL1 and pGKL2, in strains of Kluyveromyces lactis confers the killer phenotype to the host cell, by promoting the secretion of a toxin able to inhibit the growth of sensitive strains. This is an uncharacterized protein from Kluyveromyces lactis (strain ATCC 8585 / CBS 2359 / DSM 70799 / NBRC 1267 / NRRL Y-1140 / WM37) (Yeast).